We begin with the raw amino-acid sequence, 443 residues long: Anthocyanidin 3-O-glucoside 5-O-glucosyltransferase 2 (443 aa).

A signal peptide spans 1-22; the sequence is MVRRRVLLATFPAQGHINPALQ. H16 (proton acceptor) is an active-site residue. H16 lines the an anthocyanidin pocket. Q340, H355, W358, N359, S360, E363, D379, and Q380 together coordinate UDP-alpha-D-glucose.

The protein belongs to the UDP-glycosyltransferase family.

The catalysed reaction is an anthocyanidin 3-O-beta-D-glucoside + UDP-alpha-D-glucose = an anthocyanidin 3,5-di-O-beta-D-glucoside + UDP + 2 H(+). Its pathway is pigment biosynthesis; anthocyanin biosynthesis. Functionally, catalyzes the glucosylation at the O-5 position of anthocyanidin 3-glucosides to form anthocyanidin 3,5-di-O-glucosides using UDP-glucose as sugar donor. Anthocyanidin 3,5-di-O-glucosides are molecules that are responsible for pigmentation. Also acts on anthocyanidin 3-O-(6-O-malonylglucoside). Much less active with hydroxycinnamoylglucose derivatives. No activity in the absence of the 3-O-glucoside group. The polypeptide is Anthocyanidin 3-O-glucoside 5-O-glucosyltransferase 2 (PF3R6) (Perilla frutescens (Beefsteak mint)).